A 317-amino-acid chain; its full sequence is Acetyl-coenzyme A carboxylase carboxyl transferase subunit alpha (317 aa).

Residues 33–294 (NLDDEITRLQ…KKRLLADLAD (262 aa)) enclose the CoA carboxyltransferase C-terminal domain.

This sequence belongs to the AccA family. Acetyl-CoA carboxylase is a heterohexamer composed of biotin carboxyl carrier protein (AccB), biotin carboxylase (AccC) and two subunits each of ACCase subunit alpha (AccA) and ACCase subunit beta (AccD).

The protein resides in the cytoplasm. The catalysed reaction is N(6)-carboxybiotinyl-L-lysyl-[protein] + acetyl-CoA = N(6)-biotinyl-L-lysyl-[protein] + malonyl-CoA. Its pathway is lipid metabolism; malonyl-CoA biosynthesis; malonyl-CoA from acetyl-CoA: step 1/1. Functionally, component of the acetyl coenzyme A carboxylase (ACC) complex. First, biotin carboxylase catalyzes the carboxylation of biotin on its carrier protein (BCCP) and then the CO(2) group is transferred by the carboxyltransferase to acetyl-CoA to form malonyl-CoA. The protein is Acetyl-coenzyme A carboxylase carboxyl transferase subunit alpha of Histophilus somni (strain 129Pt) (Haemophilus somnus).